Consider the following 202-residue polypeptide: Dephospho-CoA kinase (202 aa).

In terms of domain architecture, DPCK spans 6–202 (KISVTGDPSS…QCFKALKGTI (197 aa)). An ATP-binding site is contributed by 14 to 19 (SSGKTE).

Belongs to the CoaE family.

It is found in the cytoplasm. It catalyses the reaction 3'-dephospho-CoA + ATP = ADP + CoA + H(+). Its pathway is cofactor biosynthesis; coenzyme A biosynthesis; CoA from (R)-pantothenate: step 5/5. Functionally, catalyzes the phosphorylation of the 3'-hydroxyl group of dephosphocoenzyme A to form coenzyme A. The sequence is that of Dephospho-CoA kinase from Chlamydia trachomatis serovar A (strain ATCC VR-571B / DSM 19440 / HAR-13).